The primary structure comprises 480 residues: MAASVVCRAATAGAQVLLRARRSPALLRTPALRSTATFAQALQFVPETQVSLLDNGLRVASEQSSQPTCTVGVWIDVGSRFETEKNNGAGYFLEHLAFKGTKNRPGSALEKEVESMGAHLNAYSTREHTAYYIKALSKDLPKAVELLGDIVQNCSLEDSQIEKERDVILREMQENDASMRDVVFNYLHATAFQGTPLAQAVEGPSENVRKLSRADLTEYLSTHYKAPRMVLAAAGGVEHQQLLDLAQKHLGGIPWTYAEDAVPTLTPCRFTGSEIRHRDDALPFAHVAIAVEGPGWASPDNVALQVANAIIGHYDCTYGGGVHLSSPLASGAVANKLCQSFQTFSICYAETGLLGAHFVCDRMKIDDMMFVLQGQWMRLCTSATESEVARGKNILRNALVSHLDGTTPVCEDIGRSLLTYGRRIPLAEWESRIAEVDASVVREICSKYIYDQCPAVAGYGPIEQLPDYNRIRSGMFWLRF.

The transit peptide at 1–34 (MAASVVCRAATAGAQVLLRARRSPALLRTPALRS) directs the protein to the mitochondrion. Residues Lys-111 and Lys-138 each carry the N6-acetyllysine modification. The residue at position 163 (Lys-163) is an N6-acetyllysine; alternate. At Lys-163 the chain carries N6-succinyllysine; alternate. Ser-212 carries the phosphoserine modification. Lys-248 is subject to N6-acetyllysine.

This sequence belongs to the peptidase M16 family. UQCRC1/QCR1 subfamily. As to quaternary structure, component of the ubiquinol-cytochrome c oxidoreductase (cytochrome b-c1 complex, complex III, CIII), a multisubunit enzyme composed of 11 subunits. The complex is composed of 3 respiratory subunits cytochrome b, cytochrome c1 and Rieske protein UQCRFS1, 2 core protein subunits UQCRC1/QCR1 and UQCRC2/QCR2, and 6 low-molecular weight protein subunits UQCRH/QCR6, UQCRB/QCR7, UQCRQ/QCR8, UQCR10/QCR9, UQCR11/QCR10 and subunit 9, the cleavage product of Rieske protein UQCRFS1. The complex exists as an obligatory dimer and forms supercomplexes (SCs) in the inner mitochondrial membrane with NADH-ubiquinone oxidoreductase (complex I, CI) and cytochrome c oxidase (complex IV, CIV), resulting in different assemblies (supercomplex SCI(1)III(2)IV(1) and megacomplex MCI(2)III(2)IV(2)). Interacts with UQCC6. Interacts with STMP1. In terms of tissue distribution, expressed in brain, including substantia nigra, striatum, cortex and cerebellum, and in spinal cord, heart, kidney, liver and muscle.

It localises to the mitochondrion inner membrane. Functionally, component of the ubiquinol-cytochrome c oxidoreductase, a multisubunit transmembrane complex that is part of the mitochondrial electron transport chain which drives oxidative phosphorylation. The respiratory chain contains 3 multisubunit complexes succinate dehydrogenase (complex II, CII), ubiquinol-cytochrome c oxidoreductase (cytochrome b-c1 complex, complex III, CIII) and cytochrome c oxidase (complex IV, CIV), that cooperate to transfer electrons derived from NADH and succinate to molecular oxygen, creating an electrochemical gradient over the inner membrane that drives transmembrane transport and the ATP synthase. The cytochrome b-c1 complex catalyzes electron transfer from ubiquinol to cytochrome c, linking this redox reaction to translocation of protons across the mitochondrial inner membrane, with protons being carried across the membrane as hydrogens on the quinol. In the process called Q cycle, 2 protons are consumed from the matrix, 4 protons are released into the intermembrane space and 2 electrons are passed to cytochrome c. The 2 core subunits UQCRC1/QCR1 and UQCRC2/QCR2 are homologous to the 2 mitochondrial-processing peptidase (MPP) subunits beta-MPP and alpha-MPP respectively, and they seem to have preserved their MPP processing properties. May be involved in the in situ processing of UQCRFS1 into the mature Rieske protein and its mitochondrial targeting sequence (MTS)/subunit 9 when incorporated into complex III. Seems to play an important role in the maintenance of proper mitochondrial function in nigral dopaminergic neurons. This is Cytochrome b-c1 complex subunit 1, mitochondrial (UQCRC1) from Homo sapiens (Human).